Reading from the N-terminus, the 238-residue chain is Serine protease SplE (238 aa).

Residues 1-36 (MNKNIIIKSIAALTILTSVTGVGTTVVEGIQQTAKA) form the signal peptide. Active-site charge relay system residues include His-75, Asp-113, and Ser-191.

The protein belongs to the peptidase S1B family.

It is found in the secreted. The sequence is that of Serine protease SplE (splE) from Staphylococcus aureus (strain USA300).